Consider the following 361-residue polypeptide: Histidine biosynthesis bifunctional protein HisB (361 aa).

The histidinol-phosphatase stretch occupies residues 1-172 (MTQPTLFIDR…PKTTACKRPP (172 aa)). Catalysis depends on D9, which acts as the Nucleophile. Positions 9 and 11 each coordinate Mg(2+). Catalysis depends on D11, which acts as the Proton donor. Zn(2+)-binding residues include C92, H94, C100, and C102. D129 lines the Mg(2+) pocket. Positions 173 to 361 (RYAEVVRTTK…NELPSSKGVL (189 aa)) are imidazoleglycerol-phosphate dehydratase.

This sequence in the N-terminal section; belongs to the histidinol-phosphatase family. The protein in the C-terminal section; belongs to the imidazoleglycerol-phosphate dehydratase family. Mg(2+) is required as a cofactor. Zn(2+) serves as cofactor.

The protein resides in the cytoplasm. It catalyses the reaction D-erythro-1-(imidazol-4-yl)glycerol 3-phosphate = 3-(imidazol-4-yl)-2-oxopropyl phosphate + H2O. The enzyme catalyses L-histidinol phosphate + H2O = L-histidinol + phosphate. It participates in amino-acid biosynthesis; L-histidine biosynthesis; L-histidine from 5-phospho-alpha-D-ribose 1-diphosphate: step 6/9. The protein operates within amino-acid biosynthesis; L-histidine biosynthesis; L-histidine from 5-phospho-alpha-D-ribose 1-diphosphate: step 8/9. The sequence is that of Histidine biosynthesis bifunctional protein HisB from Actinobacillus pleuropneumoniae serotype 3 (strain JL03).